Here is a 201-residue protein sequence, read N- to C-terminus: Molybdenum cofactor guanylyltransferase (201 aa).

GTP contacts are provided by residues 14-16, Lys31, and Asp104; that span reads LAG. Asp104 is a binding site for Mg(2+).

This sequence belongs to the MobA family. In terms of assembly, monomer. The cofactor is Mg(2+).

The protein resides in the cytoplasm. It carries out the reaction Mo-molybdopterin + GTP + H(+) = Mo-molybdopterin guanine dinucleotide + diphosphate. Its function is as follows. Transfers a GMP moiety from GTP to Mo-molybdopterin (Mo-MPT) cofactor (Moco or molybdenum cofactor) to form Mo-molybdopterin guanine dinucleotide (Mo-MGD) cofactor. The sequence is that of Molybdenum cofactor guanylyltransferase from Helicobacter pylori (strain P12).